The sequence spans 308 residues: UPF0282 protein M1425_2116 (308 aa).

Belongs to the UPF0282 family.

In Saccharolobus islandicus (strain M.14.25 / Kamchatka #1) (Sulfolobus islandicus), this protein is UPF0282 protein M1425_2116.